Reading from the N-terminus, the 156-residue chain is Small ribosomal subunit protein uS7 (156 aa).

The protein belongs to the universal ribosomal protein uS7 family. As to quaternary structure, part of the 30S ribosomal subunit. Contacts proteins S9 and S11.

Its function is as follows. One of the primary rRNA binding proteins, it binds directly to 16S rRNA where it nucleates assembly of the head domain of the 30S subunit. Is located at the subunit interface close to the decoding center, probably blocks exit of the E-site tRNA. This is Small ribosomal subunit protein uS7 from Acidobacterium capsulatum (strain ATCC 51196 / DSM 11244 / BCRC 80197 / JCM 7670 / NBRC 15755 / NCIMB 13165 / 161).